We begin with the raw amino-acid sequence, 468 residues long: Lactate utilization protein B (468 aa).

2 4Fe-4S ferredoxin-type domains span residues 303–333 (GTQFQSVLQCIRCAACINVCPVYRHIGGHAY) and 352–381 (YENYKELPYASSLCGACTEACPVKIPLHEL). C312, C315, C318, C322, C365, C368, and C372 together coordinate [4Fe-4S] cluster. The disordered stretch occupies residues 442 to 468 (PAWTDSKDLPQPNKQTVRDWFKKRGNA). Positions 457–468 (TVRDWFKKRGNA) are enriched in basic and acidic residues.

It belongs to the LutB/YkgF family.

Is involved in L-lactate degradation and allows cells to grow with lactate as the sole carbon source. Has probably a role as an electron transporter during oxidation of L-lactate. This Exiguobacterium sp. (strain ATCC BAA-1283 / AT1b) protein is Lactate utilization protein B.